The following is a 145-amino-acid chain: UPF0201 protein SSO1042 (145 aa).

Belongs to the UPF0201 family.

The sequence is that of UPF0201 protein SSO1042 from Saccharolobus solfataricus (strain ATCC 35092 / DSM 1617 / JCM 11322 / P2) (Sulfolobus solfataricus).